The sequence spans 101 residues: Large ribosomal subunit protein uL24 (101 aa).

It belongs to the universal ribosomal protein uL24 family. As to quaternary structure, part of the 50S ribosomal subunit.

Functionally, one of two assembly initiator proteins, it binds directly to the 5'-end of the 23S rRNA, where it nucleates assembly of the 50S subunit. In terms of biological role, one of the proteins that surrounds the polypeptide exit tunnel on the outside of the subunit. The chain is Large ribosomal subunit protein uL24 from Clostridioides difficile (strain 630) (Peptoclostridium difficile).